A 411-amino-acid chain; its full sequence is Mitogen-activated protein kinase 8 (411 aa).

The Protein kinase domain maps to 26 to 321; the sequence is YQNLKPIGSG…VDEALQHPYI (296 aa). ATP-binding positions include 32 to 40 and lysine 55; that span reads IGSGAQGIV. Position 116 is an S-nitrosocysteine; in inhibited form (cysteine 116). The Proton acceptor role is filled by aspartate 151. Threonine 183 bears the Phosphothreonine; by MAP2K7 mark. The TXY signature appears at 183–185; that stretch reads TPY. Tyrosine 185 is subject to Phosphotyrosine; by MAP2K4. The tract at residues 368-411 is disordered; it reads KNGVIRGQPSPLGAAVINGSQHPVSSPSVNDMSSMSTDPTLASD. The residue at position 377 (serine 377) is a Phosphoserine. Residues 390–403 are compositionally biased toward low complexity; sequence PVSSPSVNDMSSMS.

It belongs to the protein kinase superfamily. CMGC Ser/Thr protein kinase family. MAP kinase subfamily. Forms a complex with MAPK8IP1 and ARHGEF28. Found in a complex with SH3RF1, RAC1, MAP3K11/MLK3, MAP2K7/MKK7 and MAPK8IP1/JIP1. Found in a complex with SH3RF1, RAC2, MAP3K7/TAK1, MAP2K7/MKK7, MAPK8IP1/JIP1 and MAPK9/JNK2. Binds to at least four scaffolding proteins, MAPK8IP1/JIP-1, MAPK8IP2/JIP-2, MAPK8IP3/JIP-3/JSAP1 and SPAG9/MAPK8IP4/JIP-4. These proteins also bind other components of the JNK signaling pathway. Interacts with TP53, WWOX. Interacts with JAMP. Interacts with NFATC4. Interacts (phosphorylated form) with NFE2; the interaction phosphorylates NFE2 in undifferentiated cells. Interacts with MECOM; regulates JNK signaling. Interacts with PIN1; this interaction mediates MAPK8 conformational changes leading to the binding of MAPK8 to its substrates. Interacts with HSF1 (via D domain and preferentially with hyperphosphorylated form); this interaction occurs under both normal growth conditions and immediately upon heat shock. Interacts with STMN2, STMN3 and STMN4. Interacts with GRIPAP1. Interacts with POU5F1; phosphorylates POU5F1 at 'Ser-347'. Interacts with HSF4. It depends on Mg(2+) as a cofactor. Dually phosphorylated on Thr-183 and Tyr-185 by MAP2K7 and MAP2K4, which activates the enzyme. Phosphorylated by TAOK2. Phosphorylated form is more concentrated at synapses than none-phosphorylated. Post-translationally, nitrosylated upon IFN-gamma-induced endogenous NO production, which inhibits the enzyme. May be phosphorylated at Thr-183 and Tyr-185 by MAP3K1/MEKK1.

The protein resides in the cytoplasm. It localises to the nucleus. Its subcellular location is the synapse. It catalyses the reaction L-seryl-[protein] + ATP = O-phospho-L-seryl-[protein] + ADP + H(+). It carries out the reaction L-threonyl-[protein] + ATP = O-phospho-L-threonyl-[protein] + ADP + H(+). Activated by threonine and tyrosine phosphorylation by either of two dual specificity kinases, MAP2K4 and MAP2K7. MAP2K4 shows a strong preference for Tyr-185 while MAP2K7 phosphorylates Tyr-183 preferentially. Inhibited by dual specificity phosphatases, such as DUSP1. Inhibited by SERPINB3. Inhibited by IFN-gamma-induced S-nitrosylation. Serine/threonine-protein kinase involved in various processes such as cell proliferation, differentiation, migration, transformation and programmed cell death. Extracellular stimuli such as pro-inflammatory cytokines or physical stress stimulate the stress-activated protein kinase/c-Jun N-terminal kinase (SAP/JNK) signaling pathway. In this cascade, two dual specificity kinases MAP2K4/MKK4 and MAP2K7/MKK7 phosphorylate and activate MAPK8/JNK1. In turn, MAPK8/JNK1 phosphorylates a number of transcription factors, primarily components of AP-1 such as JUN, JDP2 and ATF2 and thus regulates AP-1 transcriptional activity. Phosphorylates the replication licensing factor CDT1, inhibiting the interaction between CDT1 and the histone H4 acetylase HBO1 to replication origins. Loss of this interaction abrogates the acetylation required for replication initiation. Promotes stressed cell apoptosis by phosphorylating key regulatory factors including p53/TP53 and Yes-associates protein YAP1. In T-cells, MAPK8 and MAPK9 are required for polarized differentiation of T-helper cells into Th1 cells. Contributes to the survival of erythroid cells by phosphorylating the antagonist of cell death BAD upon EPO stimulation. Mediates starvation-induced BCL2 phosphorylation, BCL2 dissociation from BECN1, and thus activation of autophagy. Phosphorylates STMN2 and hence regulates microtubule dynamics, controlling neurite elongation in cortical neurons. In the developing brain, through its cytoplasmic activity on STMN2, negatively regulates the rate of exit from multipolar stage and of radial migration from the ventricular zone. Phosphorylates several other substrates including heat shock factor protein 4 (HSF4), the deacetylase SIRT1, ELK1, or the E3 ligase ITCH. Phosphorylates the CLOCK-BMAL1 heterodimer and plays a role in the regulation of the circadian clock. Phosphorylates the heat shock transcription factor HSF1, suppressing HSF1-induced transcriptional activity. Phosphorylates POU5F1, which results in the inhibition of POU5F1's transcriptional activity and enhances its proteasomal degradation. Phosphorylates JUND and this phosphorylation is inhibited in the presence of MEN1. In neurons, phosphorylates SYT4 which captures neuronal dense core vesicles at synapses. Phosphorylates EIF4ENIF1/4-ET in response to oxidative stress, promoting P-body assembly. Phosphorylates SIRT6 in response to oxidative stress, stimulating its mono-ADP-ribosyltransferase activity. Phosphorylates NLRP3, promoting assembly of the NLRP3 inflammasome. Phosphorylates ALKBH5 in response to reactive oxygen species (ROS), promoting ALKBH5 sumoylation and inactivation. The chain is Mitogen-activated protein kinase 8 (Mapk8) from Rattus norvegicus (Rat).